The chain runs to 198 residues: Phosphoheptose isomerase (198 aa).

Positions 36–195 constitute an SIS domain; the sequence is AIEVYQNGNK…EEAIFRNKFV (160 aa). 51-53 contributes to the substrate binding site; sequence NGG. Positions 60 and 64 each coordinate Zn(2+). Substrate-binding positions include E64, 93-94, 119-121, S124, and Q171; these read ND and STS. Positions 171 and 179 each coordinate Zn(2+).

It belongs to the SIS family. GmhA subfamily. Requires Zn(2+) as cofactor.

It localises to the cytoplasm. The catalysed reaction is 2 D-sedoheptulose 7-phosphate = D-glycero-alpha-D-manno-heptose 7-phosphate + D-glycero-beta-D-manno-heptose 7-phosphate. The protein operates within carbohydrate biosynthesis; D-glycero-D-manno-heptose 7-phosphate biosynthesis; D-glycero-alpha-D-manno-heptose 7-phosphate and D-glycero-beta-D-manno-heptose 7-phosphate from sedoheptulose 7-phosphate: step 1/1. It participates in cell surface structure biogenesis; S-layer biogenesis. Catalyzes the isomerization of sedoheptulose 7-phosphate in D-glycero-D-manno-heptose 7-phosphate. This is Phosphoheptose isomerase from Aneurinibacillus thermoaerophilus.